Consider the following 339-residue polypeptide: 3-isopropylmalate dehydrogenase (339 aa).

Substrate is bound by residues R87, R97, R124, and D214. Mg(2+) is bound by residues D214, D238, and D242. 274–286 (GSAPDIAGQGIAD) provides a ligand contact to NAD(+).

Belongs to the isocitrate and isopropylmalate dehydrogenases family. LeuB type 2 subfamily. In terms of assembly, homodimer. The cofactor is Mg(2+). Requires Mn(2+) as cofactor.

The protein resides in the cytoplasm. The enzyme catalyses (2R,3S)-3-isopropylmalate + NAD(+) = 4-methyl-2-oxopentanoate + CO2 + NADH. It participates in amino-acid biosynthesis; L-leucine biosynthesis; L-leucine from 3-methyl-2-oxobutanoate: step 3/4. In terms of biological role, catalyzes the oxidation of 3-carboxy-2-hydroxy-4-methylpentanoate (3-isopropylmalate) to 3-carboxy-4-methyl-2-oxopentanoate. The product decarboxylates to 4-methyl-2 oxopentanoate. This is 3-isopropylmalate dehydrogenase from Mycobacterium ulcerans (strain Agy99).